A 389-amino-acid polypeptide reads, in one-letter code: GDSL esterase/lipase At1g28570 (389 aa).

An N-terminal signal peptide occupies residues 1–25 (MATLFMKLVSFFLILSTFCLTTVNS). The Nucleophile role is filled by serine 41. Residues asparagine 137 and asparagine 319 are each glycosylated (N-linked (GlcNAc...) asparagine). Catalysis depends on residues aspartate 344 and histidine 347.

It belongs to the 'GDSL' lipolytic enzyme family.

The protein localises to the secreted. The chain is GDSL esterase/lipase At1g28570 from Arabidopsis thaliana (Mouse-ear cress).